A 310-amino-acid chain; its full sequence is Nucleotide-binding protein BAD_0837 (310 aa).

31–38 is an ATP binding site; it reads GMSGAGRS. GTP is bound at residue 82–85; it reads DVRS.

It belongs to the RapZ-like family.

Displays ATPase and GTPase activities. This Bifidobacterium adolescentis (strain ATCC 15703 / DSM 20083 / NCTC 11814 / E194a) protein is Nucleotide-binding protein BAD_0837.